A 515-amino-acid polypeptide reads, in one-letter code: Methionine--tRNA ligase (515 aa).

The 'HIGH' region motif lies at 13-23; the sequence is AYPNGKPHIGH. The short motif at 300 to 304 is the 'KMSKS' region element; sequence KMSKS. K303 is an ATP binding site.

The protein belongs to the class-I aminoacyl-tRNA synthetase family. MetG type 2B subfamily. As to quaternary structure, monomer.

Its subcellular location is the cytoplasm. The catalysed reaction is tRNA(Met) + L-methionine + ATP = L-methionyl-tRNA(Met) + AMP + diphosphate. Its function is as follows. Is required not only for elongation of protein synthesis but also for the initiation of all mRNA translation through initiator tRNA(fMet) aminoacylation. This Brucella melitensis biotype 1 (strain ATCC 23456 / CCUG 17765 / NCTC 10094 / 16M) protein is Methionine--tRNA ligase.